Consider the following 64-residue polypeptide: Large ribosomal subunit protein bL33 (64 aa).

The protein belongs to the bacterial ribosomal protein bL33 family.

The protein is Large ribosomal subunit protein bL33 of Prochlorococcus marinus (strain MIT 9313).